We begin with the raw amino-acid sequence, 235 residues long: Uridylate kinase (235 aa).

Residue 9–12 participates in ATP binding; sequence KLSG. UMP is bound at residue glycine 51. 2 residues coordinate ATP: glycine 52 and arginine 56. Residues aspartate 71 and 132 to 139 contribute to the UMP site; that span reads TGNPYFTT. Positions 159, 165, and 168 each coordinate ATP.

This sequence belongs to the UMP kinase family. Homohexamer.

Its subcellular location is the cytoplasm. It catalyses the reaction UMP + ATP = UDP + ADP. Its pathway is pyrimidine metabolism; CTP biosynthesis via de novo pathway; UDP from UMP (UMPK route): step 1/1. With respect to regulation, inhibited by UTP. Functionally, catalyzes the reversible phosphorylation of UMP to UDP. The sequence is that of Uridylate kinase from Christiangramia forsetii (strain DSM 17595 / CGMCC 1.15422 / KT0803) (Gramella forsetii).